A 584-amino-acid chain; its full sequence is Complement component C8 alpha chain (584 aa).

The N-terminal stretch at 1–20 is a signal peptide; it reads MFAVVFFILSLMTCQPGVTA. The propeptide occupies 21-30; that stretch reads QEKVNQRVRR. Residues 38-91 form the TSP type-1 1 domain; sequence TCQLSNWSEWTDCFPCQDKKYRHRSLLQPNKFGGTICSGDIWDQASCSSSTTCV. Disulfide bonds link Cys39–Cys74, Cys50–Cys84, Cys53–Cys90, Cys96–Cys108, Cys102–Cys121, Cys115–Cys130, and Cys140–Cys177. Trp44 carries C-linked (Man) tryptophan glycosylation. Residues 94–132 form the LDL-receptor class A domain; sequence AQCGQDFQCKETGRCLKRHLVCNGDQDCLDGSDEDDCED. Ca(2+) contacts are provided by Leu113, Asn116, Asp118, Asp120, Asp126, and Glu127. Residues 135 to 498 form the MACPF domain; it reads AIDEDCSQYE…QYLMEFNACR (364 aa). 4 beta stranded membrane-spanning segments follow: residues 248–256, 259–266, 377–384, and 390–395; these read FGVTIGIGP, SPLLVGVG, GGSLGIQY, and VGGGLS. Cysteines 375 and 399 form a disulfide. Asn437 carries an N-linked (GlcNAc...) asparagine glycan. 4 cysteine pairs are disulfide-bonded: Cys497-Cys544, Cys499-Cys515, Cys502-Cys517, and Cys519-Cys528. Residues 499–529 form the EGF-like domain; sequence CGPCFNNGVPILEGTSCRCQCRLGSLGAACE. A TSP type-1 2 domain is found at 539–583; sequence DGSWSCWSSWSVCRAGIQERRRECDNPAPQNGGASCPGRKVQTQA. Residues Trp542, Trp545, and Trp548 are each glycosylated (C-linked (Man) tryptophan). 2 disulfide bridges follow: Cys551-Cys584 and Cys562-Cys574. Residues 562–584 form a disordered region; that stretch reads CDNPAPQNGGASCPGRKVQTQAC.

The protein belongs to the complement C6/C7/C8/C9 family. In terms of assembly, heterotrimer of 3 chains: alpha (C8A), beta (C8B) and gamma (C8G); the alpha and gamma chains are disulfide bonded. Component of the membrane attack complex (MAC), composed of complement C5b, C6, C7, C8A, C8B, C8G and multiple copies of the pore-forming subunit C9.

It localises to the secreted. The protein resides in the target cell membrane. With respect to regulation, membrane attack complex (MAC) assembly is inhibited by CD59, thereby protecting self-cells from damage during complement activation. CD59 acts by binding to the beta-haipins of C8 (C8A and C8B), forming an intermolecular beta-sheet that prevents incorporation of the multiple copies of C9 required for complete formation of the osmolytic pore. MAC assembly is also inhibited by clusterin (CLU) chaperones that inhibit polymerization of C9. In terms of biological role, component of the membrane attack complex (MAC), a multiprotein complex activated by the complement cascade, which inserts into a target cell membrane and forms a pore, leading to target cell membrane rupture and cell lysis. The MAC is initiated by proteolytic cleavage of C5 into complement C5b in response to the classical, alternative, lectin and GZMK complement pathways. The complement pathways consist in a cascade of proteins that leads to phagocytosis and breakdown of pathogens and signaling that strengthens the adaptive immune system. C8A, together with C8B and C8G, inserts into the target membrane, but does not form pores by itself. During MAC assembly, associates with C5b, C6 and C7 to form the C5b8 intermediate complex that inserts into the target membrane and traverses the bilayer increasing membrane rigidity. The sequence is that of Complement component C8 alpha chain from Homo sapiens (Human).